We begin with the raw amino-acid sequence, 234 residues long: MRLVQLSRHSIAFPSPEGALREPNGLLALGGDLSPARLLMAYQRGIFPWFSPGDPILWWSPDPRAVLWPESLHISRSMKRFHKRSPYRVTMNYAFGQVIEGCASDREEGTWITRGVVEAYHRLHELGHAHSIEVWCEDELVGGMYGVAQGTLFCGESMFSRMENASKTALLVFCEEFIGHGGKLIDCQVLNDHTASLGACEIPRRDYLNYLNQMRLGRLPNNFWVPRCLFSPQE.

Belongs to the L/F-transferase family.

The protein resides in the cytoplasm. The catalysed reaction is N-terminal L-lysyl-[protein] + L-leucyl-tRNA(Leu) = N-terminal L-leucyl-L-lysyl-[protein] + tRNA(Leu) + H(+). The enzyme catalyses N-terminal L-arginyl-[protein] + L-leucyl-tRNA(Leu) = N-terminal L-leucyl-L-arginyl-[protein] + tRNA(Leu) + H(+). It catalyses the reaction L-phenylalanyl-tRNA(Phe) + an N-terminal L-alpha-aminoacyl-[protein] = an N-terminal L-phenylalanyl-L-alpha-aminoacyl-[protein] + tRNA(Phe). In terms of biological role, functions in the N-end rule pathway of protein degradation where it conjugates Leu, Phe and, less efficiently, Met from aminoacyl-tRNAs to the N-termini of proteins containing an N-terminal arginine or lysine. This chain is Leucyl/phenylalanyl-tRNA--protein transferase, found in Escherichia coli O7:K1 (strain IAI39 / ExPEC).